The primary structure comprises 149 residues: Large ribosomal subunit protein uL15 (149 aa).

The tract at residues 1 to 53 (MRLHTLQPAPGAKSTRKRVGRGTSSGHGKTSGFGHKGQKARSGRVGKRGFEGG) is disordered. The span at 23 to 35 (TSSGHGKTSGFGH) shows a compositional bias: gly residues. A compositionally biased stretch (basic residues) spans 36 to 47 (KGQKARSGRVGK).

Belongs to the universal ribosomal protein uL15 family. Part of the 50S ribosomal subunit.

In terms of biological role, binds to the 23S rRNA. This Coprothermobacter proteolyticus (strain ATCC 35245 / DSM 5265 / OCM 4 / BT) protein is Large ribosomal subunit protein uL15.